A 331-amino-acid polypeptide reads, in one-letter code: Tetraacyldisaccharide 4'-kinase (331 aa).

60-67 (TIGGTGKT) is an ATP binding site.

The protein belongs to the LpxK family.

It carries out the reaction a lipid A disaccharide + ATP = a lipid IVA + ADP + H(+). It participates in glycolipid biosynthesis; lipid IV(A) biosynthesis; lipid IV(A) from (3R)-3-hydroxytetradecanoyl-[acyl-carrier-protein] and UDP-N-acetyl-alpha-D-glucosamine: step 6/6. Transfers the gamma-phosphate of ATP to the 4'-position of a tetraacyldisaccharide 1-phosphate intermediate (termed DS-1-P) to form tetraacyldisaccharide 1,4'-bis-phosphate (lipid IVA). This chain is Tetraacyldisaccharide 4'-kinase, found in Pseudomonas syringae pv. tomato (strain ATCC BAA-871 / DC3000).